A 317-amino-acid polypeptide reads, in one-letter code: MRNLSGGHVEEFVLVGFPTTPPLQLLLFVLFFAIYLLTLLENALIVFTIWLAPSLHRPMYFFLGHLSFLELWYINVTIPRLLAAFLTQDGRVSYVGCMTQLYFFIALACTECVLLAVMAYDRYLAICGPLLYPSLMPSSLATRLAAASWGSGFFSSMMKLLFISQLSYCGPNIINHFFCDISPLLNLTCSDKEQAELVDFLLALVMILLPLLAVVSSYTAIIAAILRIPTSRGRHKAFSTCAAHLAVVVIYYSSTLFTYARPRAMYTFNHNKIISVLYTIIVPFFNPAIYCLRNKEVKEAFRKTVMGRCHYPRDVQD.

The Extracellular portion of the chain corresponds to 1–25 (MRNLSGGHVEEFVLVGFPTTPPLQL). Asparagine 3 carries N-linked (GlcNAc...) asparagine glycosylation. A helical membrane pass occupies residues 26-46 (LLFVLFFAIYLLTLLENALIV). Over 47-54 (FTIWLAPS) the chain is Cytoplasmic. Residues 55 to 75 (LHRPMYFFLGHLSFLELWYIN) form a helical membrane-spanning segment. Over 76 to 99 (VTIPRLLAAFLTQDGRVSYVGCMT) the chain is Extracellular. A disulfide bridge links cysteine 97 with cysteine 189. The helical transmembrane segment at 100-120 (QLYFFIALACTECVLLAVMAY) threads the bilayer. Over 121 to 139 (DRYLAICGPLLYPSLMPSS) the chain is Cytoplasmic. Residues 140–160 (LATRLAAASWGSGFFSSMMKL) form a helical membrane-spanning segment. The Extracellular segment spans residues 161–197 (LFISQLSYCGPNIINHFFCDISPLLNLTCSDKEQAEL). Asparagine 186 is a glycosylation site (N-linked (GlcNAc...) asparagine). A helical transmembrane segment spans residues 198 to 217 (VDFLLALVMILLPLLAVVSS). The Cytoplasmic portion of the chain corresponds to 218 to 237 (YTAIIAAILRIPTSRGRHKA). The helical transmembrane segment at 238 to 258 (FSTCAAHLAVVVIYYSSTLFT) threads the bilayer. Residues 259–271 (YARPRAMYTFNHN) are Extracellular-facing. A helical transmembrane segment spans residues 272–292 (KIISVLYTIIVPFFNPAIYCL). Residues 293-317 (RNKEVKEAFRKTVMGRCHYPRDVQD) lie on the Cytoplasmic side of the membrane.

Belongs to the G-protein coupled receptor 1 family.

The protein resides in the cell membrane. Functionally, odorant receptor. The chain is Olfactory receptor 6P1 (OR6P1) from Homo sapiens (Human).